A 499-amino-acid chain; its full sequence is Zinc finger protein PLAG1 (499 aa).

The interval 1–33 (MATVIPGDLSEVRDTQKAPSGKRKRGESKPRKN) is disordered. Residues 2 to 84 (ATVIPGDLSE…SKYKLQRHMA (83 aa)) are interaction with KPNA2. A Nuclear localization signal motif is present at residues 22–25 (KRKR). 7 consecutive C2H2-type zinc fingers follow at residues 34 to 56 (FPCQ…SFSH), 62 to 86 (YKCT…MATH), 92 to 114 (HKCN…LHTH), 121 to 143 (FKCE…LALH), 150 to 172 (LTCK…LKSH), 185 to 207 (HQCE…MVVH), and 213 to 236 (FLCQ…KKSH). A decreased nuclear import with localization in the nucleus but also in the cytoplasm region spans residues 41–242 (KAFNSVEKLK…KKSHNQELLK (202 aa)). Residues 243–383 (VKTEPVDFLD…SQASSSKLGL (141 aa)) form a repression domain; contains 3 sumoylation motifs and massively decrease transcription activity region. Positions 243-499 (VKTEPVDFLD…TLPRFHQAFQ (257 aa)) are activates transcription; Inhibition of nuclear import due to lack of NLS and KPNA2 interaction. Glycyl lysine isopeptide (Lys-Gly) (interchain with G-Cter in SUMO) cross-links involve residues Lys-244 and Lys-263. The segment at 364 to 400 (QGGAPSSSQDSQASSSKLGLEPQSGSPDDGAGDLSLS) is disordered. Residues 369 to 379 (SSSQDSQASSS) show a composition bias toward low complexity. The massively activates transcription stretch occupies residues 384-499 (EPQSGSPDDG…TLPRFHQAFQ (116 aa)).

This sequence belongs to the krueppel C2H2-type zinc-finger protein family. Interacts with KPNA2, which escorts protein to the nucleus via interaction with nuclear localization signal. Interacts with E3 SUMO-protein ligase PIAS1, PIAS2 and PIAS4. In terms of processing, sumoylated with SUMO1; which inhibits transcriptional activity, but does not affect nuclear localization. Blockers of sumoylation pathway such as SENP3 and inactive UBE2I increases transcriptional capacity. Sumoylation is increased in the presence of PIAS1. Acetylated by lysine acetyltransferase EP300; which activates transcriptional capacity. Lysine residues that are sumoylated also seem to be target for acetylation. As to expression, expressed in heart, spleen, lung, kidney, brain, testis and epididymis but not in salivary glands.

The protein localises to the nucleus. Functionally, transcription factor whose activation results in up-regulation of target genes, such as IGFII, leading to uncontrolled cell proliferation: when overexpressed in cultured cells, higher proliferation rate and transformation are observed. Other target genes such as CRLF1, CRABP2, CRIP2, PIGF are strongly induced in cells with PLAG1 induction. Proto-oncogene whose ectopic expression can trigger the development of pleomorphic adenomas of the salivary gland and lipoblastomas. Cooperates with CBFB-MYH11. This Rattus norvegicus (Rat) protein is Zinc finger protein PLAG1 (Plag1).